Consider the following 584-residue polypeptide: DNA damage-binding protein CMR1 (584 aa).

Residues 29-44 are compositionally biased toward polar residues; the sequence is SATDSISREIPNQRQA. The disordered stretch occupies residues 29 to 90; it reads SATDSISREI…TEEYQKVKEE (62 aa). The span at 59–68 shows a compositional bias: basic and acidic residues; it reads IKKEPQEPSR. A coiled-coil region spans residues 76–110; that stretch reads VTMENTEEYQKVKEEMEEAERKKKELEKLKSTRLF. 6 WD repeats span residues 226 to 267, 274 to 314, 373 to 413, 431 to 469, 506 to 549, and 553 to 584; these read ITHQ…DEDP, PHGR…SSEV, LHDK…KSNS, SSRL…SELP, GRWV…LAHL, and EKVG…YLFE.

It belongs to the WD repeat DDB2/WDR76 family.

In terms of biological role, DNA-binding protein that binds to both single- and double-stranded DNA. Binds preferentially to UV-damaged DNA. May be involved in DNA-metabolic processes. In Debaryomyces hansenii (strain ATCC 36239 / CBS 767 / BCRC 21394 / JCM 1990 / NBRC 0083 / IGC 2968) (Yeast), this protein is DNA damage-binding protein CMR1.